The primary structure comprises 546 residues: High-affinity glucose transporter ght5 (546 aa).

Over 1-9 the chain is Cytoplasmic; it reads MGKNLTIVM. A helical membrane pass occupies residues 10–30; it reads LVFVSMAGWMFGADTGSIGGI. Residues 31–58 are Extracellular-facing; sequence TNMRDFQSRFADRYNPVTDSYSYSSARQ. A helical membrane pass occupies residues 59–79; it reads GLITGMVNVGSFFGCFLSSPL. At 80 to 87 the chain is on the cytoplasmic side; that stretch reads MDRIGKRT. The helical transmembrane segment at 88-108 threads the bilayer; it reads SIMFWTIVYLIGIILQVTAVP. The Extracellular portion of the chain corresponds to 109–112; sequence SWVQ. Residues 113–133 form a helical membrane-spanning segment; it reads IMVAKIWTGLSIGALSVLAPG. Residues 134-144 lie on the Cytoplasmic side of the membrane; it reads FQSEVAPADLR. A helical membrane pass occupies residues 145–165; it reads GTIVTTYQLAVTGGIFIAACI. Residues 166-179 lie on the Extracellular side of the membrane; it reads NMGTHKLHKTAQWR. Residues 180-200 traverse the membrane as a helical segment; sequence VSMGINLLWGIITFIGISFLP. Over 201 to 266 the chain is Cytoplasmic; it reads ESPRYLISVG…IFGPDIRYRT (66 aa). Residues 267 to 285 form a helical membrane-spanning segment; sequence FLGLGVMSLQQLTGDNYYF. Residues 286–301 lie on the Extracellular side of the membrane; that stretch reads YYGFEVFEGTGMNSPY. A helical transmembrane segment spans residues 302 to 322; the sequence is LSALILDAVNFGCTFGGLFVL. At 323–328 the chain is on the cytoplasmic side; it reads EFFGRR. A helical transmembrane segment spans residues 329-349; the sequence is MPLIIGALWQSITFFIYAAVG. Topologically, residues 350-363 are extracellular; it reads NRALTRKNGTSNHR. Asn357 carries N-linked (GlcNAc...) asparagine glycosylation. The helical transmembrane segment at 364–384 threads the bilayer; the sequence is AGAVMIVFSCLFIFSFAQTWG. Residues 385-404 lie on the Cytoplasmic side of the membrane; that stretch reads PAAYVIVGESYPIRYRSKCA. A helical transmembrane segment spans residues 405–425; it reads AVATTGNWLWGFLISFFTPFI. Residues 426–432 lie on the Extracellular side of the membrane; the sequence is TNSIGFK. Residues 433–453 form a helical membrane-spanning segment; the sequence is YGYIFAACNLCAACIIFLFAH. Residues 454-546 are Cytoplasmic-facing; it reads ETKGLTLEEI…SYHDQEEQFA (93 aa). The segment at 486–546 is disordered; sequence KQQEEVREKS…SYHDQEEQFA (61 aa). The segment covering 487–496 has biased composition (basic and acidic residues); that stretch reads QQEEVREKSR. The segment covering 509–519 has biased composition (acidic residues); sequence VDGEEGIEDSS. Low complexity predominate over residues 520-529; that stretch reads NDISSTTSSD. Phosphoserine is present on residues Ser528 and Ser537. Residues 530 to 546 show a composition bias toward basic and acidic residues; the sequence is GRAKPESSYHDQEEQFA.

The protein belongs to the major facilitator superfamily. Sugar transporter (TC 2.A.1.1) family.

It is found in the membrane. High-affinity glucose transporter. The protein is High-affinity glucose transporter ght5 (ght5) of Schizosaccharomyces pombe (strain 972 / ATCC 24843) (Fission yeast).